The following is an 88-amino-acid chain: Small ribosomal subunit protein bS18 (88 aa).

The disordered stretch occupies residues 1-26 (MAFAQSGGAGGGGGQRRPFFRRRKTC).

Belongs to the bacterial ribosomal protein bS18 family. In terms of assembly, part of the 30S ribosomal subunit. Forms a tight heterodimer with protein bS6.

Functionally, binds as a heterodimer with protein bS6 to the central domain of the 16S rRNA, where it helps stabilize the platform of the 30S subunit. The protein is Small ribosomal subunit protein bS18 of Xanthobacter autotrophicus (strain ATCC BAA-1158 / Py2).